Here is a 124-residue protein sequence, read N- to C-terminus: Small ribosomal subunit protein uS13 (124 aa).

A disordered region spans residues 95 to 124 (GLPVRGQRTHTNARTRKGPRRSVMGKRKKA).

The protein belongs to the universal ribosomal protein uS13 family. Part of the 30S ribosomal subunit. Forms a loose heterodimer with protein S19. Forms two bridges to the 50S subunit in the 70S ribosome.

Functionally, located at the top of the head of the 30S subunit, it contacts several helices of the 16S rRNA. In the 70S ribosome it contacts the 23S rRNA (bridge B1a) and protein L5 of the 50S subunit (bridge B1b), connecting the 2 subunits; these bridges are implicated in subunit movement. Contacts the tRNAs in the A and P-sites. This chain is Small ribosomal subunit protein uS13, found in Syntrophobacter fumaroxidans (strain DSM 10017 / MPOB).